The chain runs to 267 residues: Transcription factor HES-1-A (267 aa).

Positions 1 to 43 (MPADVMEKNSSSPVAATPASVSNTPDKPKTASEHRKSSKPIME) are disordered. A compositionally biased stretch (low complexity) spans 10 to 22 (SSSPVAATPASVS). Over residues 26-35 (DKPKTASEHR) the composition is skewed to basic and acidic residues. Positions 34-91 (HRKSSKPIMEKRRRARINESLGQLKTLILDALKKDSSRHSKLEKADILEMTVKHLRNL) constitute a bHLH domain. Residues 110–143 (YRAGFSECMNEVTRFLSTCEGVNTDVRTRLLGHL) enclose the Orange domain. The WRPW motif signature appears at 264 to 267 (WRPW).

In terms of assembly, transcription repression requires formation of a complex with a corepressor protein of the Groucho/TLE family. Interacts with the bHLH protein hes2, and binds DNA in the form of a heterodimer with the bHLH protein hey1/hrt1. Interacts with the bHLH protein hes6; this interaction may inhibit the transcriptional repressor activity. In terms of tissue distribution, starting from late neurula stage, weakly expressed in midline neural cells, where expression is restricted to the superficial layer of the prospective floorplate. Expressed in the posterior somitic mesoderm (PSM) at tailbud stage. During early tailbud stages, broadly expressed within the pronephric mesoderm both around and inside the developing pronephros. During late tailbud to early tadpole stages, expressed more ventrally in the pronephros, and although initially expressed in both the lateral and medial layers, by these later stages expression is predominantly in the lateral layer. Pronephric expression is no longer detectable in late tadpoles (stage 35).

Its subcellular location is the nucleus. Its function is as follows. Transcriptional repressor of a subset of early mesodermal genes including myod1 and t/bra. Binds DNA on N-box motifs: 5'-CACNAG-3'. Acts as a negative regulator of myogenesis, mediating Notch signaling to repress expression of myod1. The protein is Transcription factor HES-1-A (hes1-a) of Xenopus laevis (African clawed frog).